The chain runs to 1088 residues: MGKYNLILSEYLSFIYNSQSAVQIPIYYSSNSELESRCIEFHSKCLENSKNGLSLKKLFSEYSDVIENATLLSILSYSYDKYNAVERKLVKYAKSKPLEADLTLNELDYENNKITSELFPTEEEYTDSLMDPAILTSLSSNLNAVMFWLEKHENDTAEKLKIYKRRLDLFSIVASTINKYGVPRHNAKYRYEYDVMKDKPYYLVTWANSSIEMLMSVFSHEDYLIAKELIVLSYSNRSTLAKLVSSPMSILVALVDINGTFITNEELELEFSNKYVRAIVPDQTFDELKQMLDNMRKAGLVDIPKMIQDWLVDCSIERFPLMAKIYSWSFHVGFRKQKMLDAALDQLKTEYTENVDDEMYREYTMLIRDEVVKMLEESVKHDDHLLQDSELAGLLSMSSASNGESRQLKFGRKTIFSTKKNMHVMDDMANGRYTPGIIPPVNADKPIPLGRRDVPGRRTRIIFILPYEYFIAQHAVVEKMLIYAKHTREYAEFYSQSNQLLSYGDVTRFLSNNSMVLYTDVSQWDSSQHNTQPFRKGIIMGLDILANMTNDARVIQTLNLYKQTQINLMDSYVQIPDGNVIKKIQYGAVASGEKQTKAANSIANLALIKTVLSRISNKYSFITKIIRVDGDDNYAVLQFNTEVTKQMVQDVSNDVRETYARMNAKVKALVSTVGIEIAKRYIAGGKIFFRAGINLLNNEKRGQSTQWDQAAVLYSNYIVNRLRGFETDREFILTKIMQMTSVAITGSLRLFPSERVLTTNSTFKVFDSEDFIIEYGTTDDEVYIQRAFMSLSSQKSGIADEISASSTFKNYVSKLSEQLLFSKNNIVSRGIALTEKAKLNSYAPISLEKRRAQISALLTMLQKPVTFKSSKITINDILKDIKPFFTLSEAHLPMQYQKFMPNLPENVQYIIQCIGSRTYQIEDDGSKSAISRLISKYSVYKPSIEELYKVISLHENEIQLYLISLGIPKIDADTYVGSKIYSQDKYRILESYVYNLLSINYGCYQLFDFNSPDLEKLIRIPFKGKIPAVTFILHLYAKLEVINYAIKNGSWISLFCNYPKSEMIKLWKKMWNITSLRSPYTNANFFQD.

One can recognise a RdRp catalytic domain in the interval 501–687 (LSYGDVTRFL…AKRYIAGGKI (187 aa)).

The protein belongs to the reoviridae RNA-directed RNA polymerase family. In terms of assembly, interacts with VP3 (Potential). Interacts with VP2; this interaction activates VP1. Interacts with NSP5; this interaction is probably necessary for the formation of functional virus factories. Interacts with NSP2; this interaction is weak. Mg(2+) serves as cofactor.

It is found in the virion. It carries out the reaction RNA(n) + a ribonucleoside 5'-triphosphate = RNA(n+1) + diphosphate. Functionally, RNA-directed RNA polymerase that is involved in both transcription and genome replication. Together with VP3 capping enzyme, forms an enzyme complex positioned near the channels situated at each of the five-fold vertices of the core. Following infection, the outermost layer of the virus is lost, leaving a double-layered particle (DLP) made up of the core and VP6 shell. VP1 then catalyzes the transcription of fully conservative plus-strand genomic RNAs that are extruded through the DLP's channels into the cytoplasm where they function as mRNAs for translation of viral proteins. One copy of each of the viral (+)RNAs is also recruited during core assembly, together with newly synthesized polymerase complexes and VP2. The polymerase of these novo-formed particles catalyzes the synthesis of complementary minus-strands leading to dsRNA formation. To do so, the polymerase specifically recognizes and binds 4 bases 5'-UGUG-3' in the conserved 3'-sequence of plus-strand RNA templates. VP2 presumably activates the autoinhibited VP1-RNA complex to coordinate packaging and genome replication. Once dsRNA synthesis is complete, the polymerase switches to the transcriptional mode, thus providing secondary transcription. This is RNA-directed RNA polymerase from Homo sapiens (Human).